A 211-amino-acid chain; its full sequence is ATP phosphoribosyltransferase (211 aa).

The protein belongs to the ATP phosphoribosyltransferase family. Short subfamily. As to quaternary structure, heteromultimer composed of HisG and HisZ subunits.

The protein resides in the cytoplasm. The enzyme catalyses 1-(5-phospho-beta-D-ribosyl)-ATP + diphosphate = 5-phospho-alpha-D-ribose 1-diphosphate + ATP. The protein operates within amino-acid biosynthesis; L-histidine biosynthesis; L-histidine from 5-phospho-alpha-D-ribose 1-diphosphate: step 1/9. Its function is as follows. Catalyzes the condensation of ATP and 5-phosphoribose 1-diphosphate to form N'-(5'-phosphoribosyl)-ATP (PR-ATP). Has a crucial role in the pathway because the rate of histidine biosynthesis seems to be controlled primarily by regulation of HisG enzymatic activity. This Bacillus cereus (strain G9842) protein is ATP phosphoribosyltransferase.